Consider the following 273-residue polypeptide: Formamidopyrimidine-DNA glycosylase (273 aa).

Pro-2 acts as the Schiff-base intermediate with DNA in catalysis. The Proton donor role is filled by Glu-3. Residue Lys-58 is the Proton donor; for beta-elimination activity of the active site. DNA contacts are provided by His-92, Arg-111, and Lys-153. The segment at 238–272 (KVYGREGQSCLSCSSTIIKIKHSGRSTFYCKTCQY) adopts an FPG-type zinc-finger fold. The active-site Proton donor; for delta-elimination activity is the Arg-262.

The protein belongs to the FPG family. As to quaternary structure, monomer. The cofactor is Zn(2+).

The catalysed reaction is Hydrolysis of DNA containing ring-opened 7-methylguanine residues, releasing 2,6-diamino-4-hydroxy-5-(N-methyl)formamidopyrimidine.. It catalyses the reaction 2'-deoxyribonucleotide-(2'-deoxyribose 5'-phosphate)-2'-deoxyribonucleotide-DNA = a 3'-end 2'-deoxyribonucleotide-(2,3-dehydro-2,3-deoxyribose 5'-phosphate)-DNA + a 5'-end 5'-phospho-2'-deoxyribonucleoside-DNA + H(+). In terms of biological role, involved in base excision repair of DNA damaged by oxidation or by mutagenic agents. Acts as a DNA glycosylase that recognizes and removes damaged bases. Has a preference for oxidized purines, such as 7,8-dihydro-8-oxoguanine (8-oxoG). Has AP (apurinic/apyrimidinic) lyase activity and introduces nicks in the DNA strand. Cleaves the DNA backbone by beta-delta elimination to generate a single-strand break at the site of the removed base with both 3'- and 5'-phosphates. The protein is Formamidopyrimidine-DNA glycosylase of Rickettsia africae (strain ESF-5).